We begin with the raw amino-acid sequence, 268 residues long: MERYESLFAQLKERKEGAFVPFVTLGDPGIEQSLKIIDTLIEAGADALELGIPFSDPLADGPTIQNATLRAFAAGVTPAQCFEVLALIRQKHPTIPIGLLMYANLVFNKGIDEFYAECEKVGVDSVLVADVPVEESAPFRQAALRHNVAPIFICPPNADDDLLRQIASYGRGYTYLLSRAGVTGAENRAALPLNHLVAKLKEYNAAPPLQGFGISAPDQVKAAIDAGAAGAISGSAIVKIIEQHINEPEKMLAALKAFVQPMKAATRR.

Active-site proton acceptor residues include glutamate 49 and aspartate 60.

It belongs to the TrpA family. As to quaternary structure, tetramer of two alpha and two beta chains.

It catalyses the reaction (1S,2R)-1-C-(indol-3-yl)glycerol 3-phosphate + L-serine = D-glyceraldehyde 3-phosphate + L-tryptophan + H2O. The protein operates within amino-acid biosynthesis; L-tryptophan biosynthesis; L-tryptophan from chorismate: step 5/5. Functionally, the alpha subunit is responsible for the aldol cleavage of indoleglycerol phosphate to indole and glyceraldehyde 3-phosphate. This Escherichia coli O127:H6 (strain E2348/69 / EPEC) protein is Tryptophan synthase alpha chain.